A 294-amino-acid chain; its full sequence is MDEAEGNSEESGLIKQHRKEKRDLQAKIQSMKNSVPKNDKKRRKQLTEDIAKLEADLDVRHKEELEAFAQKQPEPTQVSGITNGVTSLDLGNEAPVQQPRQSKAQKRREKKAAQEKERDERIAEAEIANLSGARHLESQKLARILAERELQIRQIPSDGHCMYRAIEHQLRERGNDLTVANLRSQTADYMQNHAEDFLPFLTNSSTGDMYTQEEFLKYCTDIVNTPAWGGQLELRALSHILKTAIEVIQAESSPIVIGEEYSSKAITLVYMRHAYGLGEHYNSVELLDTSTENS.

Disordered stretches follow at residues 1–46 (MDEA…RKQL) and 67–120 (AFAQ…ERDE). Composition is skewed to polar residues over residues 27–36 (KIQSMKNSVP) and 73–86 (PEPT…NGVT). Over residues 111–120 (KAAQEKERDE) the composition is skewed to basic and acidic residues. Positions 150–287 (LQIRQIPSDG…GEHYNSVELL (138 aa)) constitute an OTU domain. The segment at 155 to 161 (IPSDGHC) is cys-loop. The active site involves Asp-158. Cys-161 (nucleophile) is an active-site residue. Residues 222 to 232 (IVNTPAWGGQL) form a variable-loop region. The interval 270 to 280 (YMRHAYGLGEH) is his-loop. His-280 is an active-site residue.

It catalyses the reaction Thiol-dependent hydrolysis of ester, thioester, amide, peptide and isopeptide bonds formed by the C-terminal Gly of ubiquitin (a 76-residue protein attached to proteins as an intracellular targeting signal).. Functionally, deubiquitinating enzyme that may play a role in the ubiquitin-dependent regulation of different cellular processes. This is Deubiquitinase OTUD6B (otud6b) from Xenopus tropicalis (Western clawed frog).